The following is a 344-amino-acid chain: tRNA N6-adenosine threonylcarbamoyltransferase (344 aa).

Fe cation contacts are provided by His113 and His117. Residues 135–139 (LVSGG), Asp169, Gly182, Asp186, and Asn278 contribute to the substrate site. Residue Asp306 coordinates Fe cation.

The protein belongs to the KAE1 / TsaD family. It depends on Fe(2+) as a cofactor.

The protein localises to the cytoplasm. It catalyses the reaction L-threonylcarbamoyladenylate + adenosine(37) in tRNA = N(6)-L-threonylcarbamoyladenosine(37) in tRNA + AMP + H(+). In terms of biological role, required for the formation of a threonylcarbamoyl group on adenosine at position 37 (t(6)A37) in tRNAs that read codons beginning with adenine. Is involved in the transfer of the threonylcarbamoyl moiety of threonylcarbamoyl-AMP (TC-AMP) to the N6 group of A37, together with TsaE and TsaB. TsaD likely plays a direct catalytic role in this reaction. The polypeptide is tRNA N6-adenosine threonylcarbamoyltransferase (Corynebacterium efficiens (strain DSM 44549 / YS-314 / AJ 12310 / JCM 11189 / NBRC 100395)).